A 224-amino-acid chain; its full sequence is Octanoyltransferase (224 aa).

The region spanning 45–223 (PSNKQAVWML…SLNKRFGLLW (179 aa)) is the BPL/LPL catalytic domain. Residues 87 to 94 (RGGDVTHH), 154 to 156 (SIG), and 167 to 169 (GIA) each bind substrate. Catalysis depends on Cys-185, which acts as the Acyl-thioester intermediate.

Belongs to the LipB family.

It localises to the cytoplasm. It carries out the reaction octanoyl-[ACP] + L-lysyl-[protein] = N(6)-octanoyl-L-lysyl-[protein] + holo-[ACP] + H(+). It participates in protein modification; protein lipoylation via endogenous pathway; protein N(6)-(lipoyl)lysine from octanoyl-[acyl-carrier-protein]: step 1/2. Catalyzes the transfer of endogenously produced octanoic acid from octanoyl-acyl-carrier-protein onto the lipoyl domains of lipoate-dependent enzymes. Lipoyl-ACP can also act as a substrate although octanoyl-ACP is likely to be the physiological substrate. This chain is Octanoyltransferase, found in Prochlorococcus marinus (strain SARG / CCMP1375 / SS120).